The following is a 394-amino-acid chain: Flap endonuclease 1 (394 aa).

The segment at 1–104 (MGIKQLFTII…GELARRYQRK (104 aa)) is N-domain. Residue aspartate 34 participates in Mg(2+) binding. 2 residues coordinate DNA: arginine 47 and arginine 70. The Mg(2+) site is built by aspartate 86, glutamate 158, glutamate 160, aspartate 179, and aspartate 181. Residues 122–253 (DVEKFSRRTV…STALKLIREH (132 aa)) form an I-domain region. Glutamate 158 contributes to the DNA binding site. Residues glycine 231 and aspartate 233 each coordinate DNA. Residue aspartate 233 coordinates Mg(2+). The interval 340-348 (QQQRLEGFF) is interaction with PCNA. The segment at 358-394 (QKAHKRKLEVKAEEAKKKLKAEKKEKAKAKARPRGTA) is disordered. Residues 374–394 (KKLKAEKKEKAKAKARPRGTA) show a composition bias toward basic residues.

It belongs to the XPG/RAD2 endonuclease family. FEN1 subfamily. In terms of assembly, interacts with PCNA. Three molecules of FEN1 bind to one PCNA trimer with each molecule binding to one PCNA monomer. PCNA stimulates the nuclease activity without altering cleavage specificity. It depends on Mg(2+) as a cofactor. Phosphorylated. Phosphorylation upon DNA damage induces relocalization to the nuclear plasma.

Its subcellular location is the nucleus. The protein localises to the nucleolus. It is found in the nucleoplasm. It localises to the mitochondrion. Functionally, structure-specific nuclease with 5'-flap endonuclease and 5'-3' exonuclease activities involved in DNA replication and repair. During DNA replication, cleaves the 5'-overhanging flap structure that is generated by displacement synthesis when DNA polymerase encounters the 5'-end of a downstream Okazaki fragment. It enters the flap from the 5'-end and then tracks to cleave the flap base, leaving a nick for ligation. Also involved in the long patch base excision repair (LP-BER) pathway, by cleaving within the apurinic/apyrimidinic (AP) site-terminated flap. Acts as a genome stabilization factor that prevents flaps from equilibrating into structures that lead to duplications and deletions. Also possesses 5'-3' exonuclease activity on nicked or gapped double-stranded DNA, and exhibits RNase H activity. Also involved in replication and repair of rDNA and in repairing mitochondrial DNA. The chain is Flap endonuclease 1 from Pyricularia oryzae (strain 70-15 / ATCC MYA-4617 / FGSC 8958) (Rice blast fungus).